We begin with the raw amino-acid sequence, 299 residues long: Pectin lyase (299 aa).

The signal sequence occupies residues 1–18; sequence MKFSTFVSLGLTAITALA. Composition is skewed to low complexity over residues 82-91 and 232-246; these read RSAATSPSSD and SASA…TTRT. Disordered regions lie at residues 82 to 105 and 227 to 246; these read RSAA…PSPS and SRGR…TTRT.

It belongs to the polysaccharide lyase 1 family.

The protein resides in the secreted. The catalysed reaction is Eliminative cleavage of (1-&gt;4)-alpha-D-galacturonan methyl ester to give oligosaccharides with 4-deoxy-6-O-methyl-alpha-D-galact-4-enuronosyl groups at their non-reducing ends.. In Peyronellaea pinodes (Pea foot rot fungus), this protein is Pectin lyase (PELA).